Reading from the N-terminus, the 186-residue chain is Inner membrane-spanning protein YciB (186 aa).

A run of 6 helical transmembrane segments spans residues 3 to 23 (FLFD…AGIY), 24 to 44 (VATT…WFKH), 49 to 69 (AMQW…LIFH), 76 to 96 (WKPT…AVLL), 121 to 141 (LVWS…AYHF), and 149 to 169 (FKLF…SVWL).

Belongs to the YciB family.

The protein resides in the cell inner membrane. Its function is as follows. Plays a role in cell envelope biogenesis, maintenance of cell envelope integrity and membrane homeostasis. This chain is Inner membrane-spanning protein YciB, found in Ralstonia nicotianae (strain ATCC BAA-1114 / GMI1000) (Ralstonia solanacearum).